A 264-amino-acid polypeptide reads, in one-letter code: Ubiquinone biosynthesis protein COQ4 homolog, mitochondrial (264 aa).

Residues 1 to 26 (MMQRCWQISLPLARRRLIPSLTSKRT) constitute a mitochondrion transit peptide. Zn(2+) is bound by residues His169, Asp170, His173, and Glu185.

The protein belongs to the COQ4 family. Component of a multi-subunit COQ enzyme complex. It depends on Zn(2+) as a cofactor.

It localises to the mitochondrion inner membrane. The catalysed reaction is a 4-hydroxy-3-methoxy-5-(all-trans-polyprenyl)benzoate + H(+) = a 2-methoxy-6-(all-trans-polyprenyl)phenol + CO2. It participates in cofactor biosynthesis; ubiquinone biosynthesis. Its function is as follows. Lyase that catalyzes the C1-decarboxylation of 4-hydroxy-3-methoxy-5-(all-trans-polyprenyl)benzoic acid into 2-methoxy-6-(all-trans-polyprenyl)phenol during ubiquinone biosynthesis. In Drosophila grimshawi (Hawaiian fruit fly), this protein is Ubiquinone biosynthesis protein COQ4 homolog, mitochondrial.